Reading from the N-terminus, the 947-residue chain is Pyruvate, phosphate dikinase 1, chloroplastic (947 aa).

The transit peptide at 1 to 71 (MPSVSRAVCV…PLRAVAAPIP (71 aa)) directs the protein to the chloroplast. Positions 39-60 (RHGKPEVAIRSGSGGSARGGHC) are disordered. Thr-527 carries the phosphothreonine; by PDRP1 modification. The active-site Tele-phosphohistidine intermediate is His-529. Residues Arg-635, Arg-692, Glu-821, Gly-842, Thr-843, Asn-844, and Asp-845 each contribute to the substrate site. Glu-821 lines the Mg(2+) pocket. Asp-845 contributes to the Mg(2+) binding site. Catalysis depends on Cys-907, which acts as the Proton donor.

This sequence belongs to the PEP-utilizing enzyme family. As to quaternary structure, homotetramer. The cofactor is Mg(2+). Post-translationally, phosphorylation of Thr-527 in the dark inactivates the enzyme. Dephosphorylation upon light stimulation reactivates the enzyme. Phosphorylation increases during the first 20 days post-pollination and then remains constant through the 40-day mature seed stage. Reactivation by dephosphorylation during germination is negligible. In terms of tissue distribution, isoform 1 is only expressed in green leaves. Isoform 2 is found in roots, stems, rachis branches, leaf sheaths, green leaves and spikelets. The non-phosphorylated PPDK in mature seeds is endosperm-localized.

Its subcellular location is the plastid. It localises to the chloroplast. It is found in the cytoplasm. It carries out the reaction pyruvate + phosphate + ATP = phosphoenolpyruvate + AMP + diphosphate + H(+). Its activity is regulated as follows. Activated by light-induced dephosphorylation. Inhibited by dark-induced phosphorylation. Both reactions are catalyzed by PDRP1. Functionally, formation of phosphoenolpyruvate. The cytoplasmic isoform supports the biosynthetic processes in the nascent endosperm and provides an efficient mechanism for glycolytic ATP synthesis in oxygen depleted tissues. May be involved in regulating the flux of carbon into starch and fatty acids of seeds and in the remobilization of nitrogen reserves in senescing leaves. In Oryza sativa subsp. japonica (Rice), this protein is Pyruvate, phosphate dikinase 1, chloroplastic (PPDK1).